The following is a 495-amino-acid chain: MAATFQYPFQCIKSVERRNSGRQLIIGSAGPKIYTYAAETGERLGIWPETANTAEAKAAPSTTGEEPPEKRRKVSPPPDQKPEDSEPASQKSRKPEASPAWSTIPILAVSADGEYVVAVTAEDKCIRVFEVEENGALKQLSERQMPKRPSAIALADDDRTILCGDKFGDVYSLPLIDTGKGSVAPRAPAKVRPDQPAATTLTVHSKRNLASLEQQLRHYGQKDKNSAEEKPSSTFEHHLLLGHVSMLTDLICVSIPMDSSSEKKRSYILTADRDEHIRVSRGPSQAHIIENYCLGHTSFVNSLCIPQWAPEYLVSGGGDNYLLVWRWNEGRIVQKVPLVDETSDSEVAVRGIWVTDKMVLVAIDGSAKLLCFTLESDGTMKAQNSIQASGNVLDLTISSKDSAVLVSVDAVHVAGSTQEWRATPSSSSTLIEAFRLKSDTENVEWEPMSEAITSQVNSQGTSEISATLEEKQKKELNDALYSSGNLRKKNLGEDE.

The interval 51 to 100 (ANTAEAKAAPSTTGEEPPEKRRKVSPPPDQKPEDSEPASQKSRKPEASPA) is disordered. WD repeat units lie at residues 99-139 (PAWS…ALKQ), 245-290 (SMLT…HIIE), and 295-337 (GHTS…QKVP).

This sequence belongs to the WD repeat TRM82 family. Forms a heterodimer with the catalytic subunit trm8.

It localises to the nucleus. It functions in the pathway tRNA modification; N(7)-methylguanine-tRNA biosynthesis. In terms of biological role, required for the formation of N(7)-methylguanine at position 46 (m7G46) in tRNA. In the complex, it is required to stabilize and induce conformational changes of the catalytic subunit. The sequence is that of tRNA (guanine-N(7)-)-methyltransferase non-catalytic subunit trm82 (trm82) from Aspergillus clavatus (strain ATCC 1007 / CBS 513.65 / DSM 816 / NCTC 3887 / NRRL 1 / QM 1276 / 107).